The sequence spans 492 residues: Serine carboxypeptidase-like 31 (492 aa).

Residues 1 to 30 (MDNYQTKNISNLLTSLCFTTLLILAPVVIC) form the signal peptide. 3 cysteine pairs are disulfide-bonded: cysteine 105/cysteine 376, cysteine 270/cysteine 283, and cysteine 307/cysteine 344. Residue asparagine 156 is glycosylated (N-linked (GlcNAc...) asparagine). Residue serine 198 is part of the active site. Asparagine 221 and asparagine 271 each carry an N-linked (GlcNAc...) asparagine glycan. Asparagine 372 and asparagine 383 each carry an N-linked (GlcNAc...) asparagine glycan. Residues aspartate 413 and histidine 465 contribute to the active site.

This sequence belongs to the peptidase S10 family. As to expression, expressed in roots, senescent leaves, stems, flowers and siliques.

It localises to the secreted. In terms of biological role, probable carboxypeptidase. This is Serine carboxypeptidase-like 31 (SCPL31) from Arabidopsis thaliana (Mouse-ear cress).